The primary structure comprises 487 residues: Probable peptidoglycan glycosyltransferase FtsW (487 aa).

9 consecutive transmembrane segments (helical) span residues 30 to 50 (VSLILLALSLMAIGLVIVTSA), 71 to 91 (IYIVLAIGAALTVMQIPMQWW), 93 to 113 (TSNAWLLLLGLVLLIAVLLVG), 122 to 142 (WLAIGPITIQAAEPAKLFFFC), 167 to 187 (VVFFAFAVLLLLQPDLGTVVV), 203 to 223 (LWQFFGLAFTGGAAVTFLIMF), 282 to 302 (FIMAILAEELGFAGVLTVLAL), 332 to 352 (IGIWFSFQTAVNVGASAGILP), and 358 to 378 (FPLLSYGGSSLIIMAAAVGLL). Disordered regions lie at residues 398-419 (KAKASTSSSRKNKPKTASSAGK) and 444-487 (IDSI…DGYV). The segment covering 401–416 (ASTSSSRKNKPKTASS) has biased composition (polar residues). Over residues 444–453 (IDSIMDDFAQ) the composition is skewed to acidic residues.

This sequence belongs to the SEDS family. FtsW subfamily.

It is found in the cell inner membrane. It carries out the reaction [GlcNAc-(1-&gt;4)-Mur2Ac(oyl-L-Ala-gamma-D-Glu-L-Lys-D-Ala-D-Ala)](n)-di-trans,octa-cis-undecaprenyl diphosphate + beta-D-GlcNAc-(1-&gt;4)-Mur2Ac(oyl-L-Ala-gamma-D-Glu-L-Lys-D-Ala-D-Ala)-di-trans,octa-cis-undecaprenyl diphosphate = [GlcNAc-(1-&gt;4)-Mur2Ac(oyl-L-Ala-gamma-D-Glu-L-Lys-D-Ala-D-Ala)](n+1)-di-trans,octa-cis-undecaprenyl diphosphate + di-trans,octa-cis-undecaprenyl diphosphate + H(+). Its pathway is cell wall biogenesis; peptidoglycan biosynthesis. Peptidoglycan polymerase that is essential for cell division. This Pseudoalteromonas atlantica (strain T6c / ATCC BAA-1087) protein is Probable peptidoglycan glycosyltransferase FtsW.